The primary structure comprises 302 residues: Sulfate adenylyltransferase subunit 2 (302 aa).

It belongs to the PAPS reductase family. CysD subfamily. Heterodimer composed of CysD, the smaller subunit, and CysN.

It carries out the reaction sulfate + ATP + H(+) = adenosine 5'-phosphosulfate + diphosphate. It participates in sulfur metabolism; hydrogen sulfide biosynthesis; sulfite from sulfate: step 1/3. Functionally, with CysN forms the ATP sulfurylase (ATPS) that catalyzes the adenylation of sulfate producing adenosine 5'-phosphosulfate (APS) and diphosphate, the first enzymatic step in sulfur assimilation pathway. APS synthesis involves the formation of a high-energy phosphoric-sulfuric acid anhydride bond driven by GTP hydrolysis by CysN coupled to ATP hydrolysis by CysD. The sequence is that of Sulfate adenylyltransferase subunit 2 from Photorhabdus laumondii subsp. laumondii (strain DSM 15139 / CIP 105565 / TT01) (Photorhabdus luminescens subsp. laumondii).